Consider the following 105-residue polypeptide: D-galactoside-specific lectin (105 aa).

The SUEL-type lectin domain occupies 13–103 (VCEDSSLTIS…KYLAVTYICS (91 aa)).

In terms of assembly, homodimer; disulfide-linked.

It is found in the cytoplasm. Functionally, this protein binds D-galactoside. May have an important role in the activation of eggs (triggered by fertilization), or in their subsequent differentiation. The dimeric form is essential for hemagglutination activity. This Heliocidaris crassispina (Sea urchin) protein is D-galactoside-specific lectin.